The sequence spans 339 residues: Dihydroorotate dehydrogenase (quinone) (339 aa).

FMN-binding positions include 62–66 and T86; that span reads AGMDK. Substrate is bound at residue K66. 111–115 is a substrate binding site; sequence NRMGF. FMN-binding residues include N139 and N172. N172 contacts substrate. S175 functions as the Nucleophile in the catalytic mechanism. N177 serves as a coordination point for substrate. FMN is bound by residues K217 and T245. 246 to 247 is a binding site for substrate; the sequence is NT. FMN-binding positions include G268, G297, and 318–319; that span reads YS.

It belongs to the dihydroorotate dehydrogenase family. Type 2 subfamily. In terms of assembly, monomer. Requires FMN as cofactor.

It is found in the cell membrane. It carries out the reaction (S)-dihydroorotate + a quinone = orotate + a quinol. It participates in pyrimidine metabolism; UMP biosynthesis via de novo pathway; orotate from (S)-dihydroorotate (quinone route): step 1/1. Catalyzes the conversion of dihydroorotate to orotate with quinone as electron acceptor. The polypeptide is Dihydroorotate dehydrogenase (quinone) (Shewanella baltica (strain OS155 / ATCC BAA-1091)).